Here is a 340-residue protein sequence, read N- to C-terminus: Adenosine kinase (340 aa).

Asp-292 is a catalytic residue.

It belongs to the carbohydrate kinase PfkB family. Requires Mg(2+) as cofactor.

The enzyme catalyses adenosine + ATP = AMP + ADP + H(+). It functions in the pathway purine metabolism; AMP biosynthesis via salvage pathway; AMP from adenosine: step 1/1. In Schizosaccharomyces pombe (strain 972 / ATCC 24843) (Fission yeast), this protein is Adenosine kinase (ado1).